The primary structure comprises 592 residues: Putative D-/L-hydantoinase subunit B (592 aa).

The protein belongs to the HyuB family. In terms of assembly, may form a complex with HyuA.

In terms of biological role, involved in the asymmetric conversion of racemic 5-substituted hydantoins to the corresponding L-amino acids. HyuA and HyuB are both required for the conversion of D- and L-5-substituted hydantoins to corresponding N-carbamoyl-D- and N-carbamoyl-L-amino acids, respectively. This is Putative D-/L-hydantoinase subunit B from Pseudomonas sp. (strain NS671).